A 93-amino-acid chain; its full sequence is Em protein H2 (93 aa).

Positions 1-93 (MASGQQERSQ…IDESKFKTKS (93 aa)) are disordered. Composition is skewed to basic and acidic residues over residues 9–19 (SQLDRKAREGE), 31–52 (LEAH…REQM), and 73–93 (GGER…KTKS).

It belongs to the small hydrophilic plant seed protein family.

It is thought to provide protection for the cytoplasm during the desiccation stage of embryo development. This chain is Em protein H2 (EMH2), found in Triticum aestivum (Wheat).